Here is a 184-residue protein sequence, read N- to C-terminus: RNA polymerase sigma factor HrpL (184 aa).

The short motif at D49–E62 is the Polymerase core binding element. The H-T-H motif DNA-binding region spans Y151 to S170.

Belongs to the sigma-70 factor family. ECF subfamily.

Sigma factors are initiation factors that promote the attachment of RNA polymerase to specific initiation sites and are then released. This sigma factor is involved in the activation of hprD as well as other hrp loci which are involved in plant pathogenicity, hrmA and avr genes. The polypeptide is RNA polymerase sigma factor HrpL (hrpL) (Pseudomonas syringae pv. syringae).